The primary structure comprises 416 residues: MSKADIIVGIQWGDEGKGKVVDKLCENYDFVCRSAGGHNAGHTIWVNGVRYALHLMPSGVLHPRCINIIGNGVVVSPEVLIAEMAQFENLKGRLYISDRAHLNLKHHSLIDIAKEKLKGKNAIGTTGKGIGPSYADKINRTGHRVGELLEPQRLCEALIKDFEANKTFFEMLEIEIPSAEELLADLKRFNEILTPYITDTTRMLWKALDEDKRVLLEGAQGSMLDIDHGTYPYVTSSSTISAGALTGLGLNPKEAGNIIGIVKAYATRVGNGAFPTEDKGEDGEKIAQIGKEIGVSTGRKRRCGWFDAVAVRYTARLNGLDALSLMKLDVLDGFEKIKICRAYEYKGMEIDYIPSDLENVQPIYEEMDGWDKVFGIKDYDLLPENAKKYIARLEELAGVKVKYISTSPERDDTIIL.

Residues 13–19 (GDEGKGK) and 41–43 (GHT) each bind GTP. The Proton acceptor role is filled by Asp-14. Mg(2+) contacts are provided by Asp-14 and Gly-41. IMP contacts are provided by residues 14 to 17 (DEGK), 39 to 42 (NAGH), Thr-126, Arg-140, Gln-220, Thr-235, and Arg-299. Catalysis depends on His-42, which acts as the Proton donor. Residue 295–301 (VSTGRKR) participates in substrate binding. GTP contacts are provided by residues Arg-301, 327–329 (KLD), and 405–407 (STS).

Belongs to the adenylosuccinate synthetase family. Homodimer. It depends on Mg(2+) as a cofactor.

It localises to the cytoplasm. It catalyses the reaction IMP + L-aspartate + GTP = N(6)-(1,2-dicarboxyethyl)-AMP + GDP + phosphate + 2 H(+). Its pathway is purine metabolism; AMP biosynthesis via de novo pathway; AMP from IMP: step 1/2. Its function is as follows. Plays an important role in the de novo pathway of purine nucleotide biosynthesis. Catalyzes the first committed step in the biosynthesis of AMP from IMP. This is Adenylosuccinate synthetase from Campylobacter jejuni subsp. jejuni serotype O:23/36 (strain 81-176).